The chain runs to 527 residues: MAPERLRSRALSAFKLRGLMLRGEAVKYLTEALQSINEIELEDALEKIIDAVEKQPLSSNMIERSVVEAAVQECSQSVDETIDHIFNIIGAFDIPRFVYNSERKKFLPLLMTNHPAPNLFGTARDKAELFRERYTILHQRTHRHELFTPPVIGSHPDESGSKFQLKTIETLLGSTSKIGDVIVLGMITQLKEGKFFLEDPTGTIQLDLSKAQFHSGLYTESCFVLAEGWFEDQVFHVNAFGFPPTEPSSTTRAYYGNTNFFGGPSNTSVKTSAKLKQLEDENKDAMFVFISDVWLDQVEVLEKLHIMFSGYSPAPPTCFILCGNFSSAPYGKNQVQALKDSLKTLADIICGYPNIHQSSRFVFVPGPEDPGFGSILPRPPFAESITNEFRQRVPFSVFTTNPCRIQYCTQEIIVFREDLVNKMCRNCVRFPSSNLDIPNHFVKTVLSQGHLTPLPLYVCPVYWAYDYALRVYPVPDLLVIADKYDPFTLTNTECLCINPGSFPRSGFSFKVFYPSNKVVEDSKLQGF.

Belongs to the DNA polymerase epsilon subunit B family. As to quaternary structure, component of the DNA polymerase epsilon complex consisting of four subunits: the catalytic subunit POLE and the accessory subunits POLE2, POLE3 and POLE4.

It localises to the nucleus. Accessory component of the DNA polymerase epsilon complex. Participates in DNA repair and in chromosomal DNA replication. This is DNA polymerase epsilon subunit 2 (POLE2) from Bos taurus (Bovine).